The chain runs to 171 residues: Co-chaperone protein HscB (171 aa).

Residues 2–74 (DYFTLFGLPA…LTRAEYLLSL (73 aa)) form the J domain.

Belongs to the HscB family. As to quaternary structure, interacts with HscA and stimulates its ATPase activity. Interacts with IscU.

Functionally, co-chaperone involved in the maturation of iron-sulfur cluster-containing proteins. Seems to help targeting proteins to be folded toward HscA. This is Co-chaperone protein HscB from Klebsiella pneumoniae subsp. pneumoniae (strain ATCC 700721 / MGH 78578).